Here is a 205-residue protein sequence, read N- to C-terminus: Proteasome subunit beta type-3 (205 aa).

The protein belongs to the peptidase T1B family. In terms of assembly, the 26S proteasome consists of a 20S proteasome core and two 19S regulatory subunits. The 20S proteasome core is composed of 28 subunits that are arranged in four stacked rings, resulting in a barrel-shaped structure. The two end rings are each formed by seven alpha subunits, and the two central rings are each formed by seven beta subunits. The catalytic chamber with the active sites is on the inside of the barrel.

It localises to the cytoplasm. The protein localises to the nucleus. Functionally, non-catalytic component of the proteasome, a multicatalytic proteinase complex which is characterized by its ability to cleave peptides with Arg, Phe, Tyr, Leu, and Glu adjacent to the leaving group at neutral or slightly basic pH. The proteasome has an ATP-dependent proteolytic activity. The chain is Proteasome subunit beta type-3 from Drosophila melanogaster (Fruit fly).